A 410-amino-acid polypeptide reads, in one-letter code: Peptidase T (410 aa).

Zn(2+) is bound at residue His-77. Asp-79 is an active-site residue. Asp-140 contributes to the Zn(2+) binding site. Glu-174 functions as the Proton acceptor in the catalytic mechanism. Positions 175, 197, and 379 each coordinate Zn(2+).

The protein belongs to the peptidase M20B family. Zn(2+) serves as cofactor.

The protein localises to the cytoplasm. It catalyses the reaction Release of the N-terminal residue from a tripeptide.. In terms of biological role, cleaves the N-terminal amino acid of tripeptides. The chain is Peptidase T from Desulfitobacterium hafniense (strain DSM 10664 / DCB-2).